A 98-amino-acid chain; its full sequence is MKTLVLVAVLGLASLYLLSYASEVQQLSRDEEEFRALVASFGGLFDTEERGVDKEGCRKLFGGCVGDGDCCLHLGCKTRKLPPFADPYCAWDWTFGRK.

A signal peptide spans 1–21 (MKTLVLVAVLGLASLYLLSYA). The propeptide occupies 22 to 50 (SEVQQLSRDEEEFRALVASFGGLFDTEER). 3 disulfide bridges follow: Cys57–Cys71, Cys64–Cys76, and Cys70–Cys89.

Belongs to the neurotoxin 10 (Hwtx-1) family. 25 (ICK4) subfamily. In terms of tissue distribution, expressed by the venom gland.

It localises to the secreted. Functionally, ion channel inhibitor. This is U11-barytoxin-Tl1b from Trittame loki (Brush-footed trapdoor spider).